Reading from the N-terminus, the 202-residue chain is Outer-membrane lipoprotein LolB (202 aa).

An N-terminal signal peptide occupies residues M1 to G18. Residue C19 is the site of N-palmitoyl cysteine attachment. Residue C19 is the site of S-diacylglycerol cysteine attachment.

It belongs to the LolB family. As to quaternary structure, monomer.

It is found in the cell outer membrane. Its function is as follows. Plays a critical role in the incorporation of lipoproteins in the outer membrane after they are released by the LolA protein. The polypeptide is Outer-membrane lipoprotein LolB (Vibrio vulnificus (strain YJ016)).